Consider the following 94-residue polypeptide: Large ribosomal subunit protein bL25 (94 aa).

It belongs to the bacterial ribosomal protein bL25 family. Part of the 50S ribosomal subunit; part of the 5S rRNA/L5/L18/L25 subcomplex. Contacts the 5S rRNA. Binds to the 5S rRNA independently of L5 and L18.

In terms of biological role, this is one of the proteins that binds to the 5S RNA in the ribosome where it forms part of the central protuberance. In Photorhabdus laumondii subsp. laumondii (strain DSM 15139 / CIP 105565 / TT01) (Photorhabdus luminescens subsp. laumondii), this protein is Large ribosomal subunit protein bL25.